Reading from the N-terminus, the 193-residue chain is dCTP deaminase (193 aa).

Residues 110-115, Asp-128, 136-138, Tyr-171, Lys-178, and Gln-182 contribute to the dCTP site; these read RSSLAR and VLE. Residue Glu-138 is the Proton donor/acceptor of the active site. Positions 170–181 are enriched in basic and acidic residues; sequence PYNRRQDAKYRD. The disordered stretch occupies residues 170-193; it reads PYNRRQDAKYRDQQGAVASRIDKD.

The protein belongs to the dCTP deaminase family. In terms of assembly, homotrimer.

The enzyme catalyses dCTP + H2O + H(+) = dUTP + NH4(+). Its pathway is pyrimidine metabolism; dUMP biosynthesis; dUMP from dCTP (dUTP route): step 1/2. In terms of biological role, catalyzes the deamination of dCTP to dUTP. The polypeptide is dCTP deaminase (Enterobacter sp. (strain 638)).